A 96-amino-acid chain; its full sequence is Probable Fe(2+)-trafficking protein (96 aa).

The tract at residues 21 to 40 is disordered; sequence LPKMPHPPFPNKKGQELQET.

This sequence belongs to the Fe(2+)-trafficking protein family.

Its function is as follows. Could be a mediator in iron transactions between iron acquisition and iron-requiring processes, such as synthesis and/or repair of Fe-S clusters in biosynthetic enzymes. The polypeptide is Probable Fe(2+)-trafficking protein (Psychrobacter arcticus (strain DSM 17307 / VKM B-2377 / 273-4)).